Reading from the N-terminus, the 149-residue chain is uncharacterized protein (149 aa).

The stretch at 111 to 140 (HKALEKATELIENEEELLKREGIKRENLKF) forms a coiled coil.

This is an uncharacterized protein from Aquifex aeolicus (strain VF5).